We begin with the raw amino-acid sequence, 791 residues long: Probable potassium transporter 11 (791 aa).

Residues 1–49 lie on the Cytoplasmic side of the membrane; that stretch reads MASLSESEGTNRGSMWELDQNLDQPMDEEASRLKNMYREKKFSSLLLLR. Residues 50–70 form a helical membrane-spanning segment; sequence LAFQSLGVVFGDLGTSPLYVF. At 71–87 the chain is on the extracellular side; the sequence is YNAFPHGVDDEEDVIGA. The helical transmembrane segment at 88–108 threads the bilayer; sequence LSLIIYTLTLIPLLKYVFVVL. Topologically, residues 109 to 175 are cytoplasmic; sequence RANDNGQGGT…EAHAYKRNCL (67 aa). Residues 176–196 form a helical membrane-spanning segment; sequence LIVVLIGTCTAIGDGILTPAI. The Extracellular portion of the chain corresponds to 197–215; that stretch reads SVLSASGGIKVQNPNMSTD. N-linked (GlcNAc...) asparagine glycosylation occurs at Asn211. Residues 216 to 236 traverse the membrane as a helical segment; it reads VVVIVSVIILIGLFSMQHYGT. The Cytoplasmic segment spans residues 237-238; that stretch reads DK. A helical transmembrane segment spans residues 239-259; sequence VGWLFAPIVLLWFILIGSVGA. Residues 260–289 lie on the Extracellular side of the membrane; it reads LNIHKYKGSVLKAYNPVYIYRYFQRRNSDS. The helical transmembrane segment at 290 to 310 threads the bilayer; it reads WASLGGIMLSITGTEALFADL. Residues 311–315 are Cytoplasmic-facing; sequence CHFPV. The chain crosses the membrane as a helical span at residues 316–338; the sequence is FAIQIAFTLIVFPCLLLAYTGQA. Residues 339–359 lie on the Extracellular side of the membrane; it reads AYIIAHKDHVADAFYRSIPDS. The chain crosses the membrane as a helical span at residues 360–380; the sequence is IYWPAFVIATAAAIVASQATI. Topologically, residues 381–411 are cytoplasmic; it reads SATYSIIKQALALGCFPRVKIVHTSKKFLGQ. The chain crosses the membrane as a helical span at residues 412-432; that stretch reads IYIPDINWVLLILCIAVTAGF. Over 433–444 the chain is Extracellular; it reads KNQSQIGNAYGT. Asn434 carries an N-linked (GlcNAc...) asparagine glycan. The chain crosses the membrane as a helical span at residues 445–465; sequence AVVIVMLVTTFLMVPIMLLVW. Residues 466 to 468 are Cytoplasmic-facing; that stretch reads KSH. The chain crosses the membrane as a helical span at residues 469-489; it reads WILVVTFIVLSLMVEIPYFSA. At 490-496 the chain is on the extracellular side; sequence CLLKIDQ. Residues 497–517 form a helical membrane-spanning segment; sequence GGWVPLVIATAFFIIMYVWHF. The Cytoplasmic portion of the chain corresponds to 518–791; sequence CTVKRYEFEM…LLNVGQIYYI (274 aa).

The protein belongs to the HAK/KUP transporter (TC 2.A.72.3) family.

Its subcellular location is the membrane. Its function is as follows. High-affinity potassium transporter. The sequence is that of Probable potassium transporter 11 from Oryza sativa subsp. japonica (Rice).